Here is a 90-residue protein sequence, read N- to C-terminus: Putative antitoxin VapB8 (90 aa).

Positions 1–56 (MEKSRCHAVAHGGGCAGSAKSHKSGGRCGQGRGAGDSHGTRGAGRRYRAASAPHPL) are disordered. Residues 26 to 36 (GRCGQGRGAGD) are compositionally biased toward gly residues.

Antitoxin component of a possible type II toxin-antitoxin (TA) system. The cognate toxin is VapC8. This Mycobacterium tuberculosis (strain ATCC 25618 / H37Rv) protein is Putative antitoxin VapB8 (vapB8).